Reading from the N-terminus, the 249-residue chain is Aspartate/glutamate leucyltransferase (249 aa).

It belongs to the R-transferase family. Bpt subfamily.

It localises to the cytoplasm. It catalyses the reaction N-terminal L-glutamyl-[protein] + L-leucyl-tRNA(Leu) = N-terminal L-leucyl-L-glutamyl-[protein] + tRNA(Leu) + H(+). The catalysed reaction is N-terminal L-aspartyl-[protein] + L-leucyl-tRNA(Leu) = N-terminal L-leucyl-L-aspartyl-[protein] + tRNA(Leu) + H(+). Its function is as follows. Functions in the N-end rule pathway of protein degradation where it conjugates Leu from its aminoacyl-tRNA to the N-termini of proteins containing an N-terminal aspartate or glutamate. The protein is Aspartate/glutamate leucyltransferase of Brucella abortus (strain S19).